We begin with the raw amino-acid sequence, 772 residues long: Metal transporter CNNM4 (772 aa).

Residues 1–175 are Extracellular-facing; sequence MAPGGGGGRR…SLLFMVEEHG (175 aa). Asn-120 carries N-linked (GlcNAc...) asparagine glycosylation. Residues 176–196 form a helical membrane-spanning segment; the sequence is RFLPLWLHILLVLVLLVLSGI. The 181-residue stretch at 176–356 folds into the CNNM transmembrane domain; that stretch reads RFLPLWLHIL…EPYNDLVKEE (181 aa). The Cytoplasmic portion of the chain corresponds to 197 to 237; sequence FSGLNLGLMALDPMELRIVQNCGTEKERRYARKIEPIRRKG. Positions 238–258 form an intramembrane region, helical; it reads NYLLCSLLLGNVLVNTSLTIL. Over 259–261 the chain is Cytoplasmic; the sequence is LDN. Residues 262 to 282 traverse the membrane as a helical segment; it reads LIGSGIMAVASSTIGIVIFGE. At 283-290 the chain is on the extracellular side; sequence ILPQALCS. Residues 291 to 313 traverse the membrane as a helical segment; it reads RHGLAVGANTIVLTKIFMLLTFP. The Cytoplasmic segment spans residues 314–772; it reads LSFPISKLLD…LHRASQEGTI (459 aa). CBS domains lie at 375–436 and 443–509; these read MTQL…CTPL and YNHP…ILDE. The interval 647-676 is disordered; the sequence is PDRSPAHPTPLSRSASLSYPDRNTDMTPSS. Phosphoserine is present on residues Ser-658, Ser-662, and Ser-767.

This sequence belongs to the ACDP family. In terms of assembly, interacts with COX11. In terms of tissue distribution, present in spinal cord dorsal horn neurons and in developing teeth (at protein level). In the tooth, higher expression is found in the ameloblasts during the transition and maturation phases of amelogenesis; reduced expression in the odontoblasts.

It is found in the cell membrane. Its function is as follows. Probable metal transporter. The interaction with the metal ion chaperone COX11 suggests that it may play a role in sensory neuron functions. May play a role in biomineralization and retinal function. The protein is Metal transporter CNNM4 (Cnnm4) of Rattus norvegicus (Rat).